The sequence spans 880 residues: MDVITTHVNADFDCLGAMVAASKLYPDALMVFSGSQEKSMRDLFLKTTGYALPFTRLRDVDFSDITRLVLVDCQHTSRIGRFAEVARRPGVEVHIYDHHPGSSGDIRPSGGEIRDCGSSTTILTRKLMEQGIEVTAVEATLMMLGIYEDTGNLTFPSTTPEDYAAASWLLERGANLNIVSDFVSQELTAEQVALLNDLLKSLRSTPVNGVDIAVAHATLDHYVGDIAVLAHMMRDMQNLDAIFLVVGMGERVYLVARSRIAEVDAGAVMRVFGGGGHATAAAATVRDQTVIQVLGRLNRLLPELVNPVRTAADLMSSPVITLPLATTITEAREILTRYNVNAMPVMDGERMAGIISRRIVEKALYHGLGNLPVDEYMHTEFLRAAPDTPINAIQDYIVGQHRRLVPVFSGERLVGVITRTDLLRYMYTGTQRNAEPVYDLGSENLPVRRREVVHLMNRHLPRPTVAMLRDLGKVGDELELPVYAVGGFVRDLLLGAENDDIDVSVEGDGILFAETVANRVGCRVKSHAKFGTAVIVFPDGLKVDVASTRLEYYETPGALPTVERSSLKMDLYRRDFTINTLAVKLNAEGFGTLIDYFGAYRDLQEKTIRVLHNLSFVEDPTRVFRAIRFEQRLGFPISRHTENLIKNAVKMGFLDKLGGRRLLNELVLILREREPVKAILRMSGLGLLRFIHPDLVLAPNTLQVLDEVKKVITWFDLLYLGEKVETWVVYFLALTSSLPDEGFWGTCTRLSVSEHYREKLIDMRVHGEQVLEVMTRKAARREDVRRSDIYFWLRGLSPEVLLYIMAKTRSDEVRRYVSLYVTQLRGIVTHITGDDLKTLGIPSGPRYREILDRVLTARLNGEAATRDDEMRIAVRLADSA.

2 CBS domains span residues 315-373 (MSSP…NLPV) and 377-435 (MHTE…RNAE). Position 487–490 (487–490 (GFVR)) interacts with ATP. Mg(2+) contacts are provided by Asp500 and Asp502. Residues 574-575 (RD), Asn579, 619-628 (DPTRVFRAIR), Arg632, and Arg661 each bind ATP.

The protein belongs to the tRNA nucleotidyltransferase/poly(A) polymerase family. Requires Mg(2+) as cofactor.

It catalyses the reaction a tRNA with a 3' CC end + ATP = a tRNA with a 3' CCA end + diphosphate. TRNA nucleotidyltransferase involved in the synthesis of the tRNA CCA terminus. Adds the terminal adenosine residue to tRNA. This Geobacter sulfurreducens (strain ATCC 51573 / DSM 12127 / PCA) protein is A-adding tRNA nucleotidyltransferase.